The primary structure comprises 201 residues: Recombination protein RecR (201 aa).

Residues 56 to 71 (CKICFNVSSDEVCQYC) form a C4-type zinc finger. Residues 79 to 174 (SMICVVEESK…TVSRLASGLP (96 aa)) enclose the Toprim domain.

Belongs to the RecR family.

Its function is as follows. May play a role in DNA repair. It seems to be involved in an RecBC-independent recombinational process of DNA repair. It may act with RecF and RecO. This chain is Recombination protein RecR, found in Cutibacterium acnes (strain DSM 16379 / KPA171202) (Propionibacterium acnes).